An 82-amino-acid polypeptide reads, in one-letter code: Delta-actitoxin-Aeq2b 2 (82 aa).

The N-terminal stretch at 1 to 19 (MNRLMILVFAAVFLALASA) is a signal peptide. A propeptide spanning residues 20-26 (DEDVDIA) is cleaved from the precursor. Cystine bridges form between Cys32–Cys79, Cys34–Cys69, and Cys62–Cys80.

This sequence belongs to the sea anemone sodium channel inhibitory toxin family. Type I subfamily.

Its subcellular location is the secreted. The protein localises to the nematocyst. Binds specifically to voltage-gated sodium channels (Nav), thereby delaying their inactivation during signal transduction. Causes death to crabs. The polypeptide is Delta-actitoxin-Aeq2b 2 (Actinia equina (Beadlet anemone)).